Reading from the N-terminus, the 584-residue chain is Long-chain-fatty-acid--AMP ligase FadD23 (584 aa).

The next 2 membrane-spanning stretches (helical) occupy residues 199–219 (YFAD…WLPF) and 225–245 (LVLG…TSPV).

It belongs to the ATP-dependent AMP-binding enzyme family.

It is found in the membrane. It catalyses the reaction holo-[(hydroxy)phthioceranic acid synthase] + hexadecanoate + ATP = hexadecanoyl-[(hydroxy)phthioceranic acid synthase] + AMP + diphosphate. It carries out the reaction holo-[(hydroxy)phthioceranic acid synthase] + octadecanoate + ATP = octadecanoyl-[(hydroxy)phthioceranic acid synthase] + AMP + diphosphate. It participates in lipid metabolism; fatty acid biosynthesis. Catalyzes the activation of long-chain fatty acids as acyl-adenylates (acyl-AMP), which are then transferred to the multifunctional polyketide synthase (PKS) type III for further chain extension. Involved in the biosynthesis of sulfolipid 1 (SL-1). The protein is Long-chain-fatty-acid--AMP ligase FadD23 (fadD23) of Mycobacterium bovis (strain ATCC BAA-935 / AF2122/97).